A 652-amino-acid chain; its full sequence is Regulator of DNA class I crossover intermediates 1 (652 aa).

A DNA-binding region (binds DNA containing a D-loop) is located at residues 1–228; that stretch reads MNWVGGSRSR…APYKRTNSSE (228 aa). Disordered regions lie at residues 464–512 and 621–652; these read YLES…KATE and EKESSHPEAGSCTEDRTADTTGGQETPTSNSL. Positions 467-477 are enriched in low complexity; the sequence is SSQSSQSASYS. Polar residues-rich tracts occupy residues 478-491 and 639-652; these read PRPTESTFSSSTDL and DTTGGQETPTSNSL.

Interacts with MSH5. Interacts with TEX11. In terms of tissue distribution, expressed mainly in testis (at protein level). Expressed in spermatogonia and enriched in spermatocytes; absent in testicular somatic cells (at protein level). No expression or low levels in other tissues.

It localises to the chromosome. In terms of biological role, involved in recombination, probably acting by stabilizing recombination intermediates during meiotic crossover formation. Required for normal germline development and fertility. Required for meiotic progression, complete chromosomal synapsis and crossover formation. Binds double-stranded DNA. However, also binds branched DNA molecules, such as those containing a D-loop or Holliday junction structure. Probably not required for formation of DNA double-strand breaks (DSBs). Also binds RNA in an RNA structure-independent manner, with a preference for binding 3'-UTR regions of mRNAs; may stabilize bound RNAs. The sequence is that of Regulator of DNA class I crossover intermediates 1 from Mus musculus (Mouse).